The following is a 127-amino-acid chain: Large ribosomal subunit protein uL22c (127 aa).

This sequence belongs to the universal ribosomal protein uL22 family. In terms of assembly, part of the 50S ribosomal subunit.

It is found in the plastid. The protein localises to the chloroplast. Its function is as follows. This protein binds specifically to 23S rRNA. In terms of biological role, the globular domain of the protein is located near the polypeptide exit tunnel on the outside of the subunit, while an extended beta-hairpin is found that lines the wall of the exit tunnel in the center of the 70S ribosome. The chain is Large ribosomal subunit protein uL22c (rpl22) from Acorus calamus var. americanus (American sweet flag).